Here is a 629-residue protein sequence, read N- to C-terminus: tRNA uridine 5-carboxymethylaminomethyl modification enzyme MnmG (629 aa).

FAD-binding positions include 14–19, Val126, and Ser181; that span reads GAGHAG. 273–287 is an NAD(+) binding site; the sequence is GPRYCPSIEDKVVRF. Gln370 serves as a coordination point for FAD.

It belongs to the MnmG family. Homodimer. Heterotetramer of two MnmE and two MnmG subunits. Requires FAD as cofactor.

Its subcellular location is the cytoplasm. NAD-binding protein involved in the addition of a carboxymethylaminomethyl (cmnm) group at the wobble position (U34) of certain tRNAs, forming tRNA-cmnm(5)s(2)U34. The polypeptide is tRNA uridine 5-carboxymethylaminomethyl modification enzyme MnmG (Bacillus cereus (strain ATCC 10987 / NRS 248)).